The sequence spans 155 residues: Small ribosomal subunit protein eS19 (155 aa).

It belongs to the eukaryotic ribosomal protein eS19 family. As to quaternary structure, component of the small ribosomal subunit.

The protein resides in the cytoplasm. In terms of biological role, component of the small ribosomal subunit. The ribosome is a large ribonucleoprotein complex responsible for the synthesis of proteins in the cell. Required for proper maturation of the small (40S) ribosomal subunit. In Entamoeba histolytica (strain ATCC 30459 / HM-1:IMSS / ABRM), this protein is Small ribosomal subunit protein eS19 (RPS19).